Consider the following 141-residue polypeptide: Large ribosomal subunit protein uL11 (141 aa).

It belongs to the universal ribosomal protein uL11 family. As to quaternary structure, part of the ribosomal stalk of the 50S ribosomal subunit. Interacts with L10 and the large rRNA to form the base of the stalk. L10 forms an elongated spine to which L12 dimers bind in a sequential fashion forming a multimeric L10(L12)X complex. Post-translationally, one or more lysine residues are methylated.

Functionally, forms part of the ribosomal stalk which helps the ribosome interact with GTP-bound translation factors. This Chlorobium phaeovibrioides (strain DSM 265 / 1930) (Prosthecochloris vibrioformis (strain DSM 265)) protein is Large ribosomal subunit protein uL11.